The primary structure comprises 300 residues: Acetylglutamate kinase (300 aa).

Substrate contacts are provided by residues 73–74, R95, and N197; that span reads GG.

This sequence belongs to the acetylglutamate kinase family. ArgB subfamily.

It localises to the cytoplasm. It carries out the reaction N-acetyl-L-glutamate + ATP = N-acetyl-L-glutamyl 5-phosphate + ADP. Its pathway is amino-acid biosynthesis; L-arginine biosynthesis; N(2)-acetyl-L-ornithine from L-glutamate: step 2/4. In terms of biological role, catalyzes the ATP-dependent phosphorylation of N-acetyl-L-glutamate. This Bordetella petrii (strain ATCC BAA-461 / DSM 12804 / CCUG 43448) protein is Acetylglutamate kinase.